A 155-amino-acid polypeptide reads, in one-letter code: Endoribonuclease YbeY (155 aa).

Zn(2+) is bound by residues His-114, His-118, and His-124.

The protein belongs to the endoribonuclease YbeY family. Zn(2+) serves as cofactor.

The protein localises to the cytoplasm. Functionally, single strand-specific metallo-endoribonuclease involved in late-stage 70S ribosome quality control and in maturation of the 3' terminus of the 16S rRNA. This Cronobacter sakazakii (strain ATCC BAA-894) (Enterobacter sakazakii) protein is Endoribonuclease YbeY.